The sequence spans 339 residues: ATPase GET3 (339 aa).

ATP is bound at residue Lys34 to Thr41. Residue Asp63 is part of the active site. ATP contacts are provided by Glu243 and Asn270. Zn(2+) is bound by residues Cys281 and Cys284.

This sequence belongs to the arsA ATPase family. Homodimer.

It is found in the cytoplasm. The protein resides in the endoplasmic reticulum. In terms of biological role, ATPase required for the post-translational delivery of tail-anchored (TA) proteins to the endoplasmic reticulum. Recognizes and selectively binds the transmembrane domain of TA proteins in the cytosol. This complex then targets to the endoplasmic reticulum by membrane-bound receptors, where the tail-anchored protein is released for insertion. This process is regulated by ATP binding and hydrolysis. ATP binding drives the homodimer towards the closed dimer state, facilitating recognition of newly synthesized TA membrane proteins. ATP hydrolysis is required for insertion. Subsequently, the homodimer reverts towards the open dimer state, lowering its affinity for the membrane-bound receptor, and returning it to the cytosol to initiate a new round of targeting. The chain is ATPase GET3 from Coccidioides immitis (strain RS) (Valley fever fungus).